Here is a 115-residue protein sequence, read N- to C-terminus: Chaperone protein PrsD (115 aa).

Belongs to the periplasmic pilus chaperone family.

It is found in the periplasm. In terms of biological role, mediates assembly of pili by forming soluble multimeric complexes with pili subunits as an intermediate step in the assembly process. In Escherichia coli, this protein is Chaperone protein PrsD (prsD).